The sequence spans 375 residues: Alcohol dehydrogenase 1 (375 aa).

Ser2 is modified (N-acetylserine). Zn(2+) contacts are provided by Cys47, His68, Cys98, Cys101, Cys104, Cys112, and Cys175. Residues 200–205, Asp224, and Lys229 each bind NAD(+); that span reads GLGGVG. Position 234 is an N6-succinyllysine (Lys234). 293 to 295 provides a ligand contact to NAD(+); it reads VGV. The residue at position 340 (Lys340) is an N6-succinyllysine. Residue Arg370 participates in NAD(+) binding.

This sequence belongs to the zinc-containing alcohol dehydrogenase family. Homodimer. It depends on Zn(2+) as a cofactor.

The protein localises to the cytoplasm. It catalyses the reaction a primary alcohol + NAD(+) = an aldehyde + NADH + H(+). It carries out the reaction a secondary alcohol + NAD(+) = a ketone + NADH + H(+). The protein is Alcohol dehydrogenase 1 (ADH1) of Oryctolagus cuniculus (Rabbit).